A 244-amino-acid polypeptide reads, in one-letter code: Flagellar L-ring protein (244 aa).

The first 18 residues, 1–18 (MNMRVFIFLIFAAASVSA), serve as a signal peptide directing secretion. The N-palmitoyl cysteine moiety is linked to residue C19. C19 carries S-diacylglycerol cysteine lipidation.

Belongs to the FlgH family. As to quaternary structure, the basal body constitutes a major portion of the flagellar organelle and consists of four rings (L,P,S, and M) mounted on a central rod.

It is found in the cell outer membrane. The protein resides in the bacterial flagellum basal body. Its function is as follows. Assembles around the rod to form the L-ring and probably protects the motor/basal body from shearing forces during rotation. This chain is Flagellar L-ring protein, found in Jannaschia sp. (strain CCS1).